Here is a 360-residue protein sequence, read N- to C-terminus: Phospho-N-acetylmuramoyl-pentapeptide-transferase (360 aa).

A run of 10 helical transmembrane segments spans residues 27–47, 70–90, 98–118, 134–154, 168–188, 199–219, 239–259, 263–283, 288–308, and 337–357; these read GALF…ISLL, GTPT…ILLW, VWVT…DDYL, LLLE…YSPA, TLLN…VGAG, GLAI…AYLV, LAVV…FNAP, IFMG…IAVA, IVLA…IIQV, and QVVI…LATL.

Belongs to the glycosyltransferase 4 family. MraY subfamily. Mg(2+) is required as a cofactor.

The protein resides in the cell inner membrane. The catalysed reaction is UDP-N-acetyl-alpha-D-muramoyl-L-alanyl-gamma-D-glutamyl-meso-2,6-diaminopimeloyl-D-alanyl-D-alanine + di-trans,octa-cis-undecaprenyl phosphate = di-trans,octa-cis-undecaprenyl diphospho-N-acetyl-alpha-D-muramoyl-L-alanyl-D-glutamyl-meso-2,6-diaminopimeloyl-D-alanyl-D-alanine + UMP. It participates in cell wall biogenesis; peptidoglycan biosynthesis. Catalyzes the initial step of the lipid cycle reactions in the biosynthesis of the cell wall peptidoglycan: transfers peptidoglycan precursor phospho-MurNAc-pentapeptide from UDP-MurNAc-pentapeptide onto the lipid carrier undecaprenyl phosphate, yielding undecaprenyl-pyrophosphoryl-MurNAc-pentapeptide, known as lipid I. The protein is Phospho-N-acetylmuramoyl-pentapeptide-transferase of Methylorubrum extorquens (strain CM4 / NCIMB 13688) (Methylobacterium extorquens).